Reading from the N-terminus, the 64-residue chain is MNAKQTQIMGGGGRDEDNAEDSAQASGQVQINTEGVDSLLDEIDGLLENNAEEFVRSYVQKGGE.

Residues 1 to 32 (MNAKQTQIMGGGGRDEDNAEDSAQASGQVQIN) form a disordered region. The tract at residues 20–58 (EDSAQASGQVQINTEGVDSLLDEIDGLLENNAEEFVRSY) is ARC ATPase binding. The span at 21–32 (DSAQASGQVQIN) shows a compositional bias: polar residues. An Isoglutamyl lysine isopeptide (Glu-Lys) (interchain with K-? in acceptor proteins) cross-link involves residue Glu-64.

This sequence belongs to the prokaryotic ubiquitin-like protein family. In terms of assembly, strongly interacts with the proteasome-associated ATPase ARC through a hydrophobic interface; the interacting region of Pup lies in its C-terminal half. There is one Pup binding site per ARC hexamer ring.

Its pathway is protein degradation; proteasomal Pup-dependent pathway. Functionally, protein modifier that is covalently attached to lysine residues of substrate proteins, thereby targeting them for proteasomal degradation. The tagging system is termed pupylation. In Corynebacterium glutamicum (strain R), this protein is Prokaryotic ubiquitin-like protein Pup.